We begin with the raw amino-acid sequence, 463 residues long: ATP synthase subunit beta (463 aa).

Residue 152–159 (GGAGVGKT) participates in ATP binding.

Belongs to the ATPase alpha/beta chains family. In terms of assembly, F-type ATPases have 2 components, CF(1) - the catalytic core - and CF(0) - the membrane proton channel. CF(1) has five subunits: alpha(3), beta(3), gamma(1), delta(1), epsilon(1). CF(0) has three main subunits: a(1), b(2) and c(9-12). The alpha and beta chains form an alternating ring which encloses part of the gamma chain. CF(1) is attached to CF(0) by a central stalk formed by the gamma and epsilon chains, while a peripheral stalk is formed by the delta and b chains.

It localises to the cell membrane. It carries out the reaction ATP + H2O + 4 H(+)(in) = ADP + phosphate + 5 H(+)(out). Its function is as follows. Produces ATP from ADP in the presence of a proton gradient across the membrane. The catalytic sites are hosted primarily by the beta subunits. This is ATP synthase subunit beta from Clostridium botulinum (strain Eklund 17B / Type B).